The chain runs to 49 residues: MRVKITLACTETGDRTYITKKNKRNNPERLELKKYNPRLRKHTLHREVK.

The protein belongs to the bacterial ribosomal protein bL33 family.

This Exiguobacterium sibiricum (strain DSM 17290 / CCUG 55495 / CIP 109462 / JCM 13490 / 255-15) protein is Large ribosomal subunit protein bL33B.